Here is a 279-residue protein sequence, read N- to C-terminus: Elongation factor Ts (279 aa).

The involved in Mg(2+) ion dislocation from EF-Tu stretch occupies residues 79–82; it reads TDFV.

This sequence belongs to the EF-Ts family.

It localises to the cytoplasm. Associates with the EF-Tu.GDP complex and induces the exchange of GDP to GTP. It remains bound to the aminoacyl-tRNA.EF-Tu.GTP complex up to the GTP hydrolysis stage on the ribosome. This Phytoplasma mali (strain AT) protein is Elongation factor Ts.